Reading from the N-terminus, the 264-residue chain is tRNA pseudouridine synthase A (264 aa).

Catalysis depends on Asp51, which acts as the Nucleophile. Tyr109 is a binding site for substrate.

This sequence belongs to the tRNA pseudouridine synthase TruA family. As to quaternary structure, homodimer.

The enzyme catalyses uridine(38/39/40) in tRNA = pseudouridine(38/39/40) in tRNA. In terms of biological role, formation of pseudouridine at positions 38, 39 and 40 in the anticodon stem and loop of transfer RNAs. This is tRNA pseudouridine synthase A from Vibrio vulnificus (strain CMCP6).